A 170-amino-acid polypeptide reads, in one-letter code: ATP synthase subunit b (170 aa).

Residues 5–25 traverse the membrane as a helical segment; it reads YFIPCLLLPTMMLASGGGGET.

It belongs to the ATPase B chain family. In terms of assembly, F-type ATPases have 2 components, F(1) - the catalytic core - and F(0) - the membrane proton channel. F(1) has five subunits: alpha(3), beta(3), gamma(1), delta(1), epsilon(1). F(0) has three main subunits: a(1), b(2) and c(10-14). The alpha and beta chains form an alternating ring which encloses part of the gamma chain. F(1) is attached to F(0) by a central stalk formed by the gamma and epsilon chains, while a peripheral stalk is formed by the delta and b chains.

The protein localises to the cell inner membrane. Functionally, f(1)F(0) ATP synthase produces ATP from ADP in the presence of a proton or sodium gradient. F-type ATPases consist of two structural domains, F(1) containing the extramembraneous catalytic core and F(0) containing the membrane proton channel, linked together by a central stalk and a peripheral stalk. During catalysis, ATP synthesis in the catalytic domain of F(1) is coupled via a rotary mechanism of the central stalk subunits to proton translocation. Its function is as follows. Component of the F(0) channel, it forms part of the peripheral stalk, linking F(1) to F(0). This Wolinella succinogenes (strain ATCC 29543 / DSM 1740 / CCUG 13145 / JCM 31913 / LMG 7466 / NCTC 11488 / FDC 602W) (Vibrio succinogenes) protein is ATP synthase subunit b.